Reading from the N-terminus, the 245-residue chain is Glucan endo-1,3-beta-glucosidase (245 aa).

The signal sequence occupies residues 1-23 (MMKTLVVVLSLSLTILSFGGAHA). 8 disulfides stabilise this stretch: C32–C244, C80–C90, C95–C102, C150–C233, C155–C216, C163–C179, C183–C192, and C193–C203.

Belongs to the thaumatin family. In terms of tissue distribution, abundantly expressed in ripening fruit.

Its subcellular location is the secreted. It carries out the reaction Hydrolysis of (1-&gt;3)-beta-D-glucosidic linkages in (1-&gt;3)-beta-D-glucans.. The chain is Glucan endo-1,3-beta-glucosidase from Prunus avium (Cherry).